A 75-amino-acid chain; its full sequence is UPF0154 protein MMOB4450 (75 aa).

Residues 7-27 (IGLIVGLSILFTIVGLVVGFF) traverse the membrane as a helical segment.

It belongs to the UPF0154 family.

Its subcellular location is the cell membrane. This is UPF0154 protein MMOB4450 from Mycoplasma mobile (strain ATCC 43663 / 163K / NCTC 11711) (Mesomycoplasma mobile).